A 645-amino-acid polypeptide reads, in one-letter code: Cysteine-rich receptor-like protein kinase 19 (645 aa).

The first 20 residues, Met-1 to Ala-20, serve as a signal peptide directing secretion. Residues Gln-21–Ser-262 are Extracellular-facing. 2 consecutive Gnk2-homologous domains span residues Phe-24–Ile-129 and Thr-135–Phe-239. Asn-29, Asn-39, Asn-57, Asn-101, Asn-185, Asn-241, and Asn-260 each carry an N-linked (GlcNAc...) asparagine glycan. A helical membrane pass occupies residues Val-263–Phe-283. At Ser-284–Arg-645 the chain is on the cytoplasmic side. The 278-residue stretch at Phe-326–Ile-603 folds into the Protein kinase domain. ATP-binding positions include Leu-332–Val-340 and Lys-354. The residue at position 399 (Tyr-399) is a Phosphotyrosine. Asp-451 functions as the Proton acceptor in the catalytic mechanism. Thr-491 is subject to Phosphothreonine. The residue at position 499 (Tyr-499) is a Phosphotyrosine. A disordered region spans residues Arg-616–Arg-645. Over residues Glu-620–Cys-632 the composition is skewed to polar residues.

Belongs to the protein kinase superfamily. Ser/Thr protein kinase family. CRK subfamily. In terms of assembly, interacts with MWL1.

It localises to the membrane. It catalyses the reaction L-seryl-[protein] + ATP = O-phospho-L-seryl-[protein] + ADP + H(+). The catalysed reaction is L-threonyl-[protein] + ATP = O-phospho-L-threonyl-[protein] + ADP + H(+). The protein is Cysteine-rich receptor-like protein kinase 19 (CRK19) of Arabidopsis thaliana (Mouse-ear cress).